Here is a 680-residue protein sequence, read N- to C-terminus: Outer dense fiber protein 2 (680 aa).

Residues 27 to 46 (LPKPSATSSQKSHKRGMKGD) form a disordered region. 2 positions are modified to phosphoserine: serine 68 and serine 69. At threonine 87 the chain carries Phosphothreonine. The residue at position 90 (serine 90) is a Phosphoserine; by TSSK4. Phosphoserine is present on residues serine 101 and serine 104. Residue threonine 105 is modified to Phosphothreonine. Phosphoserine is present on residues serine 110 and serine 124. A Glycyl lysine isopeptide (Lys-Gly) (interchain with G-Cter in SUMO2) cross-link involves residue lysine 133. Serine 134 carries the phosphoserine modification. A coiled-coil region spans residues 139–212 (QKGERQMAKR…MSKLVEAEMD (74 aa)). At threonine 226 the chain carries Phosphothreonine. Phosphoserine is present on serine 256. 2 coiled-coil regions span residues 275 to 418 (KEDS…AEQL) and 456 to 630 (EIIV…SDLR). Residues 387-410 (KQKGDRDKESLKKAIRAQKERAEK) form a disordered region. Serine 627 bears the Phosphoserine mark. A disordered region spans residues 632 to 680 (RETGGDQCPEYRVPTGDCQEGGGNPPVPAAARGENTGMWDPGKAVGERH).

This sequence belongs to the ODF2 family. In terms of assembly, self-associates. Associates with microtubules and forms a fibrillar structure partially linked to the microtubule network. Interacts via its C-terminus with PLK1. Interacts with ODF1. Interacts with MARK4; the interaction is required for localization of ODF2 to centrioles. Interacts with TSSK4. Interacts with AKNA. Interacts with QRICH2. Interacts with CFAP58. Interacts with BBOF1. Interacts with CCDC38. Interacts with CCDC42. Post-translationally, tyrosine phosphorylated. Phosphorylated on Ser-90 by TSSK4.

Its subcellular location is the cytoplasm. It is found in the cytoskeleton. It localises to the microtubule organizing center. The protein resides in the centrosome. The protein localises to the cell projection. Its subcellular location is the cilium. It is found in the centriole. It localises to the spindle pole. The protein resides in the flagellum. Seems to be a major component of sperm tail outer dense fibers (ODF). ODFs are filamentous structures located on the outside of the axoneme in the midpiece and principal piece of the mammalian sperm tail and may help to maintain the passive elastic structures and elastic recoil of the sperm tail. May have a modulating influence on sperm motility. Functions as a general scaffold protein that is specifically localized at the distal/subdistal appendages of mother centrioles. Component of the centrosome matrix required for the localization of PLK1 and NIN to the centrosomes. Required for the formation and/or maintenance of normal CETN1 assembly. The protein is Outer dense fiber protein 2 (ODF2) of Pongo abelii (Sumatran orangutan).